Here is a 383-residue protein sequence, read N- to C-terminus: Alkanesulfonate monooxygenase (383 aa).

It belongs to the SsuD family. Homotetramer.

The enzyme catalyses an alkanesulfonate + FMNH2 + O2 = an aldehyde + FMN + sulfite + H2O + 2 H(+). In terms of biological role, catalyzes the desulfonation of aliphatic sulfonates. The sequence is that of Alkanesulfonate monooxygenase from Erwinia pyrifoliae (strain DSM 12163 / CIP 106111 / Ep16/96).